Here is a 729-residue protein sequence, read N- to C-terminus: Fatty acid oxidation complex subunit alpha (729 aa).

Positions 1 to 189 (MLYKGDTLYL…KIGLVDGVVK (189 aa)) are enoyl-CoA hydratase/isomerase. Asp296 contributes to the substrate binding site. The segment at 311–729 (ETPKQAAVLG…ARPVGDLKTA (419 aa)) is 3-hydroxyacyl-CoA dehydrogenase. NAD(+) contacts are provided by residues Met324, Asp343, 400 to 402 (VVE), Lys407, and Ser429. His450 serves as the catalytic For 3-hydroxyacyl-CoA dehydrogenase activity. Asn453 is a binding site for NAD(+). Asn500 and Tyr660 together coordinate substrate. Positions 708–729 (RHNEPYYPPVEPARPVGDLKTA) are disordered.

The protein in the N-terminal section; belongs to the enoyl-CoA hydratase/isomerase family. This sequence in the C-terminal section; belongs to the 3-hydroxyacyl-CoA dehydrogenase family. Heterotetramer of two alpha chains (FadB) and two beta chains (FadA).

It carries out the reaction a (3S)-3-hydroxyacyl-CoA + NAD(+) = a 3-oxoacyl-CoA + NADH + H(+). It catalyses the reaction a (3S)-3-hydroxyacyl-CoA = a (2E)-enoyl-CoA + H2O. The catalysed reaction is a 4-saturated-(3S)-3-hydroxyacyl-CoA = a (3E)-enoyl-CoA + H2O. The enzyme catalyses (3S)-3-hydroxybutanoyl-CoA = (3R)-3-hydroxybutanoyl-CoA. It carries out the reaction a (3Z)-enoyl-CoA = a 4-saturated (2E)-enoyl-CoA. It catalyses the reaction a (3E)-enoyl-CoA = a 4-saturated (2E)-enoyl-CoA. The protein operates within lipid metabolism; fatty acid beta-oxidation. Its function is as follows. Involved in the aerobic and anaerobic degradation of long-chain fatty acids via beta-oxidation cycle. Catalyzes the formation of 3-oxoacyl-CoA from enoyl-CoA via L-3-hydroxyacyl-CoA. It can also use D-3-hydroxyacyl-CoA and cis-3-enoyl-CoA as substrate. The chain is Fatty acid oxidation complex subunit alpha from Citrobacter koseri (strain ATCC BAA-895 / CDC 4225-83 / SGSC4696).